We begin with the raw amino-acid sequence, 240 residues long: 6-phosphogluconolactonase (240 aa).

The protein belongs to the glucosamine/galactosamine-6-phosphate isomerase family. 6-phosphogluconolactonase subfamily.

The catalysed reaction is 6-phospho-D-glucono-1,5-lactone + H2O = 6-phospho-D-gluconate + H(+). The protein operates within carbohydrate degradation; pentose phosphate pathway; D-ribulose 5-phosphate from D-glucose 6-phosphate (oxidative stage): step 2/3. Hydrolysis of 6-phosphogluconolactone to 6-phosphogluconate. The polypeptide is 6-phosphogluconolactonase (pgl) (Nostoc sp. (strain PCC 7120 / SAG 25.82 / UTEX 2576)).